Consider the following 86-residue polypeptide: Venom metalloproteinase (86 aa).

Aspartate 7 lines the Ca(2+) pocket. Zn(2+) is bound at residue histidine 67. Glutamate 68 is a catalytic residue. Residues histidine 71 and histidine 77 each coordinate Zn(2+).

The protein belongs to the venom metalloproteinase (M12B) family. Requires Zn(2+) as cofactor. As to expression, expressed by the venom gland.

The protein localises to the secreted. The polypeptide is Venom metalloproteinase (Tityus serrulatus (Brazilian scorpion)).